Consider the following 232-residue polypeptide: Large ribosomal subunit protein uL1 (232 aa).

Belongs to the universal ribosomal protein uL1 family. Part of the 50S ribosomal subunit.

Functionally, binds directly to 23S rRNA. The L1 stalk is quite mobile in the ribosome, and is involved in E site tRNA release. In terms of biological role, protein L1 is also a translational repressor protein, it controls the translation of the L11 operon by binding to its mRNA. The polypeptide is Large ribosomal subunit protein uL1 (Amoebophilus asiaticus (strain 5a2)).